The following is an 896-amino-acid chain: Translation initiation factor IF-2 (896 aa).

Positions 93–219 are enriched in basic and acidic residues; that stretch reads VKRDPQEAER…RMAEENEKNW (127 aa). Positions 93 to 307 are disordered; the sequence is VKRDPQEAER…GSALQQGFQK (215 aa). Basic residues predominate over residues 256–271; that stretch reads GRSRSSKAARPAKKGN. A compositionally biased stretch (basic and acidic residues) spans 272–285; it reads KHAESKADREEARA. The 170-residue stretch at 395-564 folds into the tr-type G domain; it reads PRAPVVTIMG…LLQAEVLELK (170 aa). A G1 region spans residues 404–411; that stretch reads GHVDHGKT. Residue 404 to 411 participates in GTP binding; sequence GHVDHGKT. Positions 429-433 are G2; it reads GITQH. The G3 stretch occupies residues 450–453; it reads DTPG. GTP contacts are provided by residues 450-454 and 504-507; these read DTPGH and NKID. Positions 504–507 are G4; the sequence is NKID. Positions 540 to 542 are G5; it reads SAK.

Belongs to the TRAFAC class translation factor GTPase superfamily. Classic translation factor GTPase family. IF-2 subfamily.

The protein resides in the cytoplasm. Functionally, one of the essential components for the initiation of protein synthesis. Protects formylmethionyl-tRNA from spontaneous hydrolysis and promotes its binding to the 30S ribosomal subunits. Also involved in the hydrolysis of GTP during the formation of the 70S ribosomal complex. In Klebsiella pneumoniae subsp. pneumoniae (strain ATCC 700721 / MGH 78578), this protein is Translation initiation factor IF-2.